Here is a 570-residue protein sequence, read N- to C-terminus: Proline--tRNA ligase (570 aa).

The protein belongs to the class-II aminoacyl-tRNA synthetase family. ProS type 1 subfamily. In terms of assembly, homodimer.

The protein resides in the cytoplasm. The enzyme catalyses tRNA(Pro) + L-proline + ATP = L-prolyl-tRNA(Pro) + AMP + diphosphate. Catalyzes the attachment of proline to tRNA(Pro) in a two-step reaction: proline is first activated by ATP to form Pro-AMP and then transferred to the acceptor end of tRNA(Pro). As ProRS can inadvertently accommodate and process non-cognate amino acids such as alanine and cysteine, to avoid such errors it has two additional distinct editing activities against alanine. One activity is designated as 'pretransfer' editing and involves the tRNA(Pro)-independent hydrolysis of activated Ala-AMP. The other activity is designated 'posttransfer' editing and involves deacylation of mischarged Ala-tRNA(Pro). The misacylated Cys-tRNA(Pro) is not edited by ProRS. The sequence is that of Proline--tRNA ligase from Neisseria meningitidis serogroup C / serotype 2a (strain ATCC 700532 / DSM 15464 / FAM18).